A 419-amino-acid chain; its full sequence is Probable serine/threonine-protein kinase DDB_G0290859 (419 aa).

In terms of domain architecture, Protein kinase spans 40–387; it reads YDIISTIGSG…ASTIKKHPFF (348 aa). Residues 46–54 and Lys69 each bind ATP; that span reads IGSGSYGEV. Asp173 serves as the catalytic Proton acceptor. Residues 388–419 form the AGC-kinase C-terminal domain; sequence EGINWEEMANFNVEPPFKPTLSSDDDISYFTN.

This sequence belongs to the protein kinase superfamily. AGC Ser/Thr protein kinase family.

It catalyses the reaction L-seryl-[protein] + ATP = O-phospho-L-seryl-[protein] + ADP + H(+). The enzyme catalyses L-threonyl-[protein] + ATP = O-phospho-L-threonyl-[protein] + ADP + H(+). This is Probable serine/threonine-protein kinase DDB_G0290859 from Dictyostelium discoideum (Social amoeba).